The following is a 248-amino-acid chain: PF03932 family protein CutC (248 aa).

It belongs to the CutC family. In terms of assembly, homodimer.

It is found in the cytoplasm. The chain is PF03932 family protein CutC from Escherichia coli (strain SMS-3-5 / SECEC).